The chain runs to 456 residues: MLPSQSPAIFTVSRLNQTVRLLLEHEMGQVWISGEISNFTQPASGHWYFTLKDDTAQVRCAMFRNSNRRVTFRPQHGQQVLVRANITLYEPRGDYQIIVESMQPAGEGLLQQKYEQLKAKLQAEGLFDQQYKKPLPSPAHCVGVITSKTGAALHDILHVLKRRDPSLPVIIYPAAVQGDDAPGQIVRAIELANQRNECDVLIVGRGGGSLEDLWSFNDERVARAIFTSRIPVVSAVGHETDVTIADFVADLRAPTPSAAAEVVSRNQQELLRQVQSTRQRLEMAMDYYLANRTRRFTQIHHRLQQQHPQLRLARQQTMLERLQKRMSFALENQLKRTGQQQQRLTQRLNQQNPQPKIHRAQTRIQQLEYRLAETLRAQLSATRERFGNAVTHLEAVSPLSTLARGYSVTTATDGNVLKKVKQVKAGEMLTTRLEDGWIESEVKNIQPVKKSRKKVH.

Positions 1 to 103 (MLPSQSPAIF…DYQIIVESMQ (103 aa)) are binds ssDNA, also required to bind the small subunit.

This sequence belongs to the XseA family. As to quaternary structure, heterooligomer composed of two different subunits with an approximate ratio of 4:1 for small to large subunit. Also estimated to have a 6:1 ration for small to large subunits. Does not require a metal cofactor. serves as cofactor.

It is found in the cytoplasm. The enzyme catalyses Exonucleolytic cleavage in either 5'- to 3'- or 3'- to 5'-direction to yield nucleoside 5'-phosphates.. Functionally, bidirectionally degrades single-stranded DNA into large acid-insoluble oligonucleotides, which are then degraded further into small acid-soluble oligonucleotides. It can degrade 3' or 5' ss regions extending from the termini of duplex DNA molecules and displaced ss regions. It can also excise thymine dimers in vitro. ssDNA-binding requires both subunits. Required for production of the mature 5'-end of retron Ec78 or Ec83 msDNA. Overproduction of this subunit in the absence of an equivalent quantity of the small subunit is toxic, causing cell elongation and chromosome fragmentation or loss; its toxicity is mostly suppressed by RecA. The chain is Exodeoxyribonuclease 7 large subunit from Escherichia coli (strain K12).